A 212-amino-acid chain; its full sequence is ER lumen protein-retaining receptor 2 (212 aa).

Topologically, residues 1 to 4 are lumenal; sequence MNVF. Residues 5–24 traverse the membrane as a helical segment; sequence RLSGDLCHLAAIIILLLKIW. The Cytoplasmic segment spans residues 25 to 32; it reads NSRSCAGI. The chain crosses the membrane as a helical span at residues 33 to 52; the sequence is SGKSQLLFAMVFTTRYLDLF. Positions 47-48 are interaction with the K-D-E-L motif on target proteins; the sequence is RY. Over 53–58 the chain is Lumenal; the sequence is TSFISL. A helical membrane pass occupies residues 59–79; it reads YNTSMKVIYMGCAYATVYLIY. The Cytoplasmic segment spans residues 80-92; the sequence is MKFKATYDGNHDT. The helical transmembrane segment at 93 to 110 threads the bilayer; it reads FRVEFLVVPVGGLSVLVN. The Lumenal portion of the chain corresponds to 111–116; the sequence is HDFSPL. A helical membrane pass occupies residues 117 to 135; sequence EILWTFSIYLESVAILPQL. Over 136–149 the chain is Cytoplasmic; it reads FMISKTGEAETITT. Residues 150-168 traverse the membrane as a helical segment; the sequence is HYLFFLGLYRALYLFNWIW. The interval 159-169 is interaction with the K-D-E-L motif on target proteins; the sequence is RALYLFNWIWR. The Lumenal portion of the chain corresponds to 169 to 178; it reads RFSFEGFFDL. A helical transmembrane segment spans residues 179–199; that stretch reads IAIVAGVVQTILYCDFFYLYV. The Cytoplasmic segment spans residues 200-212; sequence TKVLKGKKLSLPA. The segment at 204–207 is important for recycling of cargo proteins with the sequence motif K-D-E-L from the Golgi to the endoplasmic reticulum; it reads KGKK.

Belongs to the ERD2 family.

It is found in the endoplasmic reticulum membrane. The protein resides in the golgi apparatus membrane. The protein localises to the cytoplasmic vesicle. It localises to the COPI-coated vesicle membrane. Functionally, receptor for the C-terminal sequence motif K-D-E-L that is present on endoplasmic reticulum resident proteins and that mediates their recycling from the Golgi back to the endoplasmic reticulum. Binding is pH dependent, and is optimal at pH 5-5.4. This chain is ER lumen protein-retaining receptor 2 (kdelr2), found in Xenopus laevis (African clawed frog).